A 738-amino-acid chain; its full sequence is Polyribonucleotide nucleotidyltransferase (738 aa).

Residues aspartate 487 and aspartate 493 each coordinate Mg(2+). The region spanning 554 to 613 (PKIVTMTINPDKIRDVIGPGGKMINSIIDQTGVKIDIEQDGTVFIASTDQEGIDLAMSMI) is the KH domain. In terms of domain architecture, S1 motif spans 623–691 (GEVYDATVRR…DKGRVNASRK (69 aa)). The interval 704-738 (EAYEAKRKAARESRPPRDSRPPRRDGDRRPPRSTN) is disordered.

It belongs to the polyribonucleotide nucleotidyltransferase family. The cofactor is Mg(2+).

It localises to the cytoplasm. The catalysed reaction is RNA(n+1) + phosphate = RNA(n) + a ribonucleoside 5'-diphosphate. In terms of biological role, involved in mRNA degradation. Catalyzes the phosphorolysis of single-stranded polyribonucleotides processively in the 3'- to 5'-direction. In Exiguobacterium sp. (strain ATCC BAA-1283 / AT1b), this protein is Polyribonucleotide nucleotidyltransferase.